The following is a 313-amino-acid chain: Foldase protein PrsA (313 aa).

An N-terminal signal peptide occupies residues 1–20; it reads MKKKLLAGAITLLSVATLAA. Residue cysteine 21 is the site of N-palmitoyl cysteine attachment. Cysteine 21 carries the S-diacylglycerol cysteine lipid modification. Positions 143–241 constitute a PpiC domain; the sequence is TPDVTAQIIR…SQYYIVKLTK (99 aa).

It belongs to the PrsA family.

It localises to the cell membrane. The enzyme catalyses [protein]-peptidylproline (omega=180) = [protein]-peptidylproline (omega=0). Its function is as follows. Plays a major role in protein secretion by helping the post-translocational extracellular folding of several secreted proteins. The polypeptide is Foldase protein PrsA (Streptococcus pneumoniae serotype 4 (strain ATCC BAA-334 / TIGR4)).